The sequence spans 671 residues: DNA ligase (671 aa).

Residues 32-36 (DAEYD), 81-82 (SL), and Glu-113 each bind NAD(+). The N6-AMP-lysine intermediate role is filled by Lys-115. NAD(+) is bound by residues Arg-136, Glu-173, Lys-290, and Lys-314. Zn(2+) is bound by residues Cys-408, Cys-411, Cys-426, and Cys-432. One can recognise a BRCT domain in the interval 593-671 (EIDSPFAGKT…EAEMLRLLGS (79 aa)).

It belongs to the NAD-dependent DNA ligase family. LigA subfamily. Requires Mg(2+) as cofactor. The cofactor is Mn(2+).

It catalyses the reaction NAD(+) + (deoxyribonucleotide)n-3'-hydroxyl + 5'-phospho-(deoxyribonucleotide)m = (deoxyribonucleotide)n+m + AMP + beta-nicotinamide D-nucleotide.. Its function is as follows. DNA ligase that catalyzes the formation of phosphodiester linkages between 5'-phosphoryl and 3'-hydroxyl groups in double-stranded DNA using NAD as a coenzyme and as the energy source for the reaction. It is essential for DNA replication and repair of damaged DNA. This is DNA ligase from Escherichia coli O157:H7.